The sequence spans 122 residues: Large ribosomal subunit protein uL14c (122 aa).

It belongs to the universal ribosomal protein uL14 family. Part of the 50S ribosomal subunit.

It localises to the plastid. The protein localises to the chloroplast. Binds to 23S rRNA. This chain is Large ribosomal subunit protein uL14c, found in Ipomoea purpurea (Common morning glory).